A 551-amino-acid polypeptide reads, in one-letter code: Interleukin-2 receptor subunit beta (551 aa).

An N-terminal signal peptide occupies residues 1–26 (MAAPALSWRLPLLILLLPLATSWASA). Residues 27-240 (AVNGTSQFTC…TKPAALGKDT (214 aa)) are Extracellular-facing. 3 N-linked (GlcNAc...) asparagine glycosylation sites follow: Asn29, Asn43, and Asn71. 3 cysteine pairs are disulfide-bonded: Cys36–Cys46, Cys59–Cys110, and Cys74–Cys86. The Fibronectin type-III domain occupies 134–234 (APISLQVVHV…QPLAFRTKPA (101 aa)). The N-linked (GlcNAc...) asparagine glycan is linked to Asn149. Positions 220–224 (WSPWS) match the WSXWS motif motif. Residues 241–265 (IPWLGHLLVGLSGAFGFIILVYLLI) traverse the membrane as a helical segment. Residues 266 to 551 (NCRNTGPWLK…LQGQDPTHLV (286 aa)) are Cytoplasmic-facing. Positions 278–286 (LKCNTPDPS) match the Box 1 motif motif. 2 disordered regions span residues 389 to 416 (EEDP…GEDD) and 432 to 486 (PSLL…VDFQ).

Belongs to the type I cytokine receptor family. Type 4 subfamily. In terms of assembly, non-covalent dimer of an alpha and a beta subunit. IL2R exists in 3 different forms: a high affinity dimer, an intermediate affinity monomer (beta subunit), and a low affinity monomer (alpha subunit). The high and intermediate affinity forms also associate with a gamma subunit. Interacts with SHB upon interleukin stimulation. (Microbial infection) Interacts with HTLV-1 accessory protein p12I.

Its subcellular location is the cell membrane. Receptor for interleukin-2. This beta subunit is involved in receptor mediated endocytosis and transduces the mitogenic signals of IL2. Probably in association with IL15RA, involved in the stimulation of neutrophil phagocytosis by IL15. The polypeptide is Interleukin-2 receptor subunit beta (Homo sapiens (Human)).